The chain runs to 233 residues: Small ribosomal subunit protein uS2 (233 aa).

It belongs to the universal ribosomal protein uS2 family.

This Bacillus mycoides (strain KBAB4) (Bacillus weihenstephanensis) protein is Small ribosomal subunit protein uS2.